The chain runs to 308 residues: Elongation factor Ts (308 aa).

Positions 80-83 are involved in Mg(2+) ion dislocation from EF-Tu; sequence TDFV.

Belongs to the EF-Ts family.

Its subcellular location is the cytoplasm. Functionally, associates with the EF-Tu.GDP complex and induces the exchange of GDP to GTP. It remains bound to the aminoacyl-tRNA.EF-Tu.GTP complex up to the GTP hydrolysis stage on the ribosome. This is Elongation factor Ts from Rhodopseudomonas palustris (strain BisB5).